Consider the following 123-residue polypeptide: CD59 glycoprotein (123 aa).

The first 25 residues, 1 to 25 (MGSKGGFILLWLLSILAVLCHLGHS), serve as a signal peptide directing secretion. One can recognise a UPAR/Ly6 domain in the interval 26 to 103 (LQCYNCINPA…LCNKSDATIS (78 aa)). Disulfide bonds link cysteine 28/cysteine 51, cysteine 31/cysteine 38, cysteine 44/cysteine 65, cysteine 71/cysteine 89, and cysteine 90/cysteine 95. An N-linked (GlcNAc...) asparagine glycan is attached at asparagine 43. Serine 98 carries GPI-anchor amidated serine lipidation. Residues 99–123 (DATISSGKTALLVILLLVATWHFCL) constitute a propeptide, removed in mature form.

As to quaternary structure, interacts with T-cell surface antigen CD2. N- and O-glycosylated. In terms of tissue distribution, expressed in all tissues tested (lung, testis liver, kidney, spleen, heart and skeletal muscle). Highest levels in lung and spleen, lowest levels in liver and skeletal muscle.

It is found in the cell membrane. Its subcellular location is the secreted. Potent inhibitor of the complement membrane attack complex (MAC) action, which protects self-cells from damage during complement activation. Acts by binding to the beta-haipins of C8 (C8A and C8B) components of the assembling MAC, forming an intermolecular beta-sheet that prevents incorporation of the multiple copies of C9 required for complete formation of the osmolytic pore. This is CD59 glycoprotein from Sus scrofa (Pig).